We begin with the raw amino-acid sequence, 1156 residues long: Condensin-2 complex subunit G2 (1156 aa).

The stretch at 460–498 is one HEAT repeat; sequence MLPALKFCLHDNSEKVRVAFVDMLLKIKAVRAAKFWKIC. The interval 587–611 is disordered; that stretch reads PNEDTEDEDDDEGDGEGIVRGDSEK. The segment covering 589 to 601 has biased composition (acidic residues); it reads EDTEDEDDDEGDG.

As to quaternary structure, component of the condensin-2 complex, which contains the smc2 and smc4 heterodimer, and three non SMC subunits that probably regulate the complex: ncaph2, ncapd3 and ncapg2.

The protein localises to the nucleus. Functionally, regulatory subunit of the condensin-2 complex, a complex which establishes mitotic chromosome architecture and is involved in physical rigidity of the chromatid axis. The protein is Condensin-2 complex subunit G2 (ncapg2) of Xenopus laevis (African clawed frog).